We begin with the raw amino-acid sequence, 281 residues long: Cytochrome c oxidase subunit 3 (281 aa).

7 consecutive transmembrane segments (helical) span residues 34-54 (PWPI…VMTF), 59-79 (NGLF…TLWF), 103-123 (GFVL…WAFF), 148-168 (WEVP…VTYA), 179-199 (VIYG…FQGF), 220-240 (ATGF…VGLF), and 259-279 (ILYW…VYWW).

It belongs to the cytochrome c oxidase subunit 3 family. In terms of assembly, component of the cytochrome c oxidase (complex IV, CIV), a multisubunit enzyme composed of a catalytic core of 3 subunits and several supernumerary subunits. The complex exists as a monomer or a dimer and forms supercomplexes (SCs) in the inner mitochondrial membrane with ubiquinol-cytochrome c oxidoreductase (cytochrome b-c1 complex, complex III, CIII).

It is found in the mitochondrion inner membrane. The catalysed reaction is 4 Fe(II)-[cytochrome c] + O2 + 8 H(+)(in) = 4 Fe(III)-[cytochrome c] + 2 H2O + 4 H(+)(out). Functionally, component of the cytochrome c oxidase, the last enzyme in the mitochondrial electron transport chain which drives oxidative phosphorylation. The respiratory chain contains 3 multisubunit complexes succinate dehydrogenase (complex II, CII), ubiquinol-cytochrome c oxidoreductase (cytochrome b-c1 complex, complex III, CIII) and cytochrome c oxidase (complex IV, CIV), that cooperate to transfer electrons derived from NADH and succinate to molecular oxygen, creating an electrochemical gradient over the inner membrane that drives transmembrane transport and the ATP synthase. Cytochrome c oxidase is the component of the respiratory chain that catalyzes the reduction of oxygen to water. Electrons originating from reduced cytochrome c in the intermembrane space (IMS) are transferred via the dinuclear copper A center (CU(A)) of subunit 2 and heme A of subunit 1 to the active site in subunit 1, a binuclear center (BNC) formed by heme A3 and copper B (CU(B)). The BNC reduces molecular oxygen to 2 water molecules using 4 electrons from cytochrome c in the IMS and 4 protons from the mitochondrial matrix. In Rhizopus stolonifer (Rhizopus nigricans), this protein is Cytochrome c oxidase subunit 3 (COX3).